Consider the following 134-residue polypeptide: Phosphoribosyl-AMP cyclohydrolase (134 aa).

Aspartate 78 contacts Mg(2+). Cysteine 79 lines the Zn(2+) pocket. 2 residues coordinate Mg(2+): aspartate 80 and aspartate 82. The Zn(2+) site is built by cysteine 96 and cysteine 103.

Belongs to the PRA-CH family. In terms of assembly, homodimer. Mg(2+) is required as a cofactor. Zn(2+) serves as cofactor.

It localises to the cytoplasm. The enzyme catalyses 1-(5-phospho-beta-D-ribosyl)-5'-AMP + H2O = 1-(5-phospho-beta-D-ribosyl)-5-[(5-phospho-beta-D-ribosylamino)methylideneamino]imidazole-4-carboxamide. It participates in amino-acid biosynthesis; L-histidine biosynthesis; L-histidine from 5-phospho-alpha-D-ribose 1-diphosphate: step 3/9. Catalyzes the hydrolysis of the adenine ring of phosphoribosyl-AMP. The polypeptide is Phosphoribosyl-AMP cyclohydrolase (Cupriavidus taiwanensis (strain DSM 17343 / BCRC 17206 / CCUG 44338 / CIP 107171 / LMG 19424 / R1) (Ralstonia taiwanensis (strain LMG 19424))).